We begin with the raw amino-acid sequence, 498 residues long: ATP synthase subunit beta, chloroplastic (498 aa).

172-179 (GGAGVGKT) is a binding site for ATP.

Belongs to the ATPase alpha/beta chains family. In terms of assembly, F-type ATPases have 2 components, CF(1) - the catalytic core - and CF(0) - the membrane proton channel. CF(1) has five subunits: alpha(3), beta(3), gamma(1), delta(1), epsilon(1). CF(0) has four main subunits: a(1), b(1), b'(1) and c(9-12).

Its subcellular location is the plastid. The protein localises to the chloroplast thylakoid membrane. It carries out the reaction ATP + H2O + 4 H(+)(in) = ADP + phosphate + 5 H(+)(out). Its function is as follows. Produces ATP from ADP in the presence of a proton gradient across the membrane. The catalytic sites are hosted primarily by the beta subunits. The polypeptide is ATP synthase subunit beta, chloroplastic (Montinia caryophyllacea (Wild clove bush)).